A 307-amino-acid polypeptide reads, in one-letter code: Aspartate carbamoyltransferase catalytic subunit (307 aa).

The carbamoyl phosphate site is built by R56 and T57. K84 contacts L-aspartate. Residues R106, H136, and Q139 each coordinate carbamoyl phosphate. Positions 169 and 221 each coordinate L-aspartate. Positions 262 and 263 each coordinate carbamoyl phosphate.

Belongs to the aspartate/ornithine carbamoyltransferase superfamily. ATCase family. As to quaternary structure, heterododecamer (2C3:3R2) of six catalytic PyrB chains organized as two trimers (C3), and six regulatory PyrI chains organized as three dimers (R2).

It catalyses the reaction carbamoyl phosphate + L-aspartate = N-carbamoyl-L-aspartate + phosphate + H(+). It participates in pyrimidine metabolism; UMP biosynthesis via de novo pathway; (S)-dihydroorotate from bicarbonate: step 2/3. In terms of biological role, catalyzes the condensation of carbamoyl phosphate and aspartate to form carbamoyl aspartate and inorganic phosphate, the committed step in the de novo pyrimidine nucleotide biosynthesis pathway. The polypeptide is Aspartate carbamoyltransferase catalytic subunit (Streptococcus pneumoniae (strain P1031)).